Consider the following 632-residue polypeptide: MAEETQHNKLAAAKKKLKEYWQKNRPRVPAGVNRNRKTNGSIPETATSGGCQPPGDSATGFHREGPTSSATLKDLESPCQERAVVLDSTSVKISRLKNTIKSLKQQKKQVEHQLEEEKKANNERQKAERELEVQIQTLIIQKEELNTDLYHMERSLRYFEEESKDLAVRLQHSLQCKGELESALSAVIATEKKKANQLSSCSKAHTEWELEQSLQDQALLKAQLTQLKESFQQLQLERDECAEHIEGERARWHQRMSKMSQEICTLKKEKQQDMRRVEELERSLSKLKNQMAEPLPPEPPAVPSEVELQHLRKELERVAGELQSQVKNNQHISLLNRRQEERIREQEERLRKQEERLQEQHEKLRQLAKPQSVFEELNNENKSTLQLEQQVKELQEKLGEEHLEAASQQNQQLTAQLSLMALPGEGHGGEHLDSEGEEAPRPMPSVPEDPESREAMSSFMDHLKEKADLSELVKKQELRFIQYWQERCHQKIHHLLSEPGGRAKDAALGGGHHQAGAQGGDEGEAAGAAADGIAAYSNYNNGHRKFLAAAHNSADEPGPGAPAPQELGAADKHGDLREVTLTSSAQGEAREDPLLDKPTAQPIVQDHQEHPGLGSNCCVPLFCWAWLPRRRR.

Positions 1–76 (MAEETQHNKL…TSSATLKDLE (76 aa)) are disordered. Over residues 38–50 (TNGSIPETATSGG) the composition is skewed to polar residues. Coiled coils occupy residues 85-150 (VLDS…TDLY) and 209-421 (ELEQ…SLMA). 3 disordered regions span residues 423-452 (PGEG…DPES), 505-524 (DAAL…DEGE), and 552-612 (NSAD…EHPG). Over residues 427-440 (HGGEHLDSEGEEAP) the composition is skewed to basic and acidic residues. Over residues 508–520 (LGGGHHQAGAQGG) the composition is skewed to gly residues. The segment covering 569–578 (AADKHGDLRE) has biased composition (basic and acidic residues).

This sequence belongs to the GOLGA6 family.

The polypeptide is Golgin subfamily A member 8O (GOLGA8O) (Homo sapiens (Human)).